Reading from the N-terminus, the 512-residue chain is Sodium/proline symporter (512 aa).

13 helical membrane passes run 16-36 (WQTY…GFYG), 54-74 (IGPY…WMIM), 85-105 (LSAM…YFVV), 139-159 (IISG…GFVS), 174-194 (FGLI…GYLA), 200-220 (FFQG…AMMN), 240-260 (LFKG…LGYF), 286-306 (ISWM…GIAF), 327-347 (VLFH…AIMS), 381-401 (FVMI…AIAW), 410-430 (LVGN…LFAL), 438-458 (AGAV…IAWI), and 467-487 (IFGL…TYVV).

It belongs to the sodium:solute symporter (SSF) (TC 2.A.21) family.

The protein resides in the cell membrane. It catalyses the reaction L-proline(in) + Na(+)(in) = L-proline(out) + Na(+)(out). Functionally, catalyzes the sodium-dependent uptake of extracellular L-proline. Since most S.aureus strains are L-proline auxotrophs, this transporter may aid the bacterial persistence during an infection of tissues with low proline concentrations. The sequence is that of Sodium/proline symporter (putP) from Staphylococcus aureus (strain Mu3 / ATCC 700698).